A 237-amino-acid polypeptide reads, in one-letter code: tRNA (guanine-N(7)-)-methyltransferase (237 aa).

Positions 67, 92, 119, and 141 each coordinate S-adenosyl-L-methionine. The active site involves Asp-141. Residues Lys-145, Asp-177, and 214 to 217 each bind substrate; that span reads TRYE.

This sequence belongs to the class I-like SAM-binding methyltransferase superfamily. TrmB family.

It catalyses the reaction guanosine(46) in tRNA + S-adenosyl-L-methionine = N(7)-methylguanosine(46) in tRNA + S-adenosyl-L-homocysteine. It participates in tRNA modification; N(7)-methylguanine-tRNA biosynthesis. In terms of biological role, catalyzes the formation of N(7)-methylguanine at position 46 (m7G46) in tRNA. In Jannaschia sp. (strain CCS1), this protein is tRNA (guanine-N(7)-)-methyltransferase.